Here is a 747-residue protein sequence, read N- to C-terminus: Protein TraI (747 aa).

Disordered stretches follow at residues 510–594 (LNKE…PQSQ) and 624–652 (VEQQ…TPPG). Positions 513-526 (ENTHERTERPEHRG) are enriched in basic and acidic residues. Residues 537-562 (QRPAADQHATGAAAVARAGDGRPAAG) are compositionally biased toward low complexity.

Functionally, the initiation process of transfer DNA synthesis requires the interaction of at least three plasmid-specific components (TraH, TraI, and TraJ) at the transfer origin resulting in the assembly of a specialized nucleoprotein complex - the relaxosome. Site and strand specific cleavage at the transfer origin is dependent on TraI and TraJ. In Escherichia coli, this protein is Protein TraI (traI).